Here is a 222-residue protein sequence, read N- to C-terminus: Charged multivesicular body protein 2a (222 aa).

At Met-1 the chain carries N-acetylmethionine. The stretch at 12-53 (EELLRQNQRALNRAMRELDRERQKLETQEKKIIADIKKMAKQ) forms a coiled coil. Residues 56-222 (MDAVRIMAKD…EERLKNLRRD (167 aa)) form an interaction with VPS4B region. Residues 179–188 (LSNLPSTGGS) are compositionally biased toward polar residues. Residues 179 to 198 (LSNLPSTGGSLSVAAGGKKA) form a disordered region. Residue Ser-184 is modified to Phosphoserine. The residue at position 185 (Thr-185) is a Phosphothreonine. Residues Ser-188, Ser-190, and Ser-203 each carry the phosphoserine modification. Positions 195–222 (GKKAEATASALADADADLEERLKNLRRD) form a coiled coil. Residues 210–220 (ADLEERLKNLR) carry the MIT-interacting motif motif. The interaction with VTA1 stretch occupies residues 217-222 (KNLRRD).

It belongs to the SNF7 family. As to quaternary structure, probable core component of the endosomal sorting required for transport complex III (ESCRT-III). ESCRT-III components are thought to multimerize to form a flat lattice on the perimeter membrane of the endosome. Several assembly forms of ESCRT-III may exist that interact and act sequentially. In vitro, heteromerizes with CHMP3 (but not CHMP4) to form helical tubular structures that expose membrane-interacting sites on the outside whereas VPS4B can associate on the inside of the tubule. Interacts with CHMP1B, CHMP2B, CHMP3, CHMP4A, CHMP4B, CHMP4C and CHMP5. Interacts with VPS4A; the interaction is direct. Interacts with VPS4B; the interaction is direct. Interacts with MITD1. Interacts with VTA1; the interaction probably involves the open conformation of CHMP2A. In terms of processing, ISGylated in a CHMP5-dependent manner. Isgylation weakens and inhibits its interactions with VPS4A and VTA1 respectively. In terms of tissue distribution, widely expressed. Highly expressed in brain, heart, liver and kidney.

Its subcellular location is the late endosome membrane. It is found in the cytoplasm. It localises to the nucleus envelope. In terms of biological role, probable core component of the endosomal sorting required for transport complex III (ESCRT-III) which is involved in multivesicular bodies (MVBs) formation and sorting of endosomal cargo proteins into MVBs. MVBs contain intraluminal vesicles (ILVs) that are generated by invagination and scission from the limiting membrane of the endosome and mostly are delivered to lysosomes enabling degradation of membrane proteins, such as stimulated growth factor receptors, lysosomal enzymes and lipids. The MVB pathway appears to require the sequential function of ESCRT-O, -I,-II and -III complexes. ESCRT-III proteins mostly dissociate from the invaginating membrane before the ILV is released. The ESCRT machinery also functions in topologically equivalent membrane fission events, such as the terminal stages of cytokinesis. Together with SPAST, the ESCRT-III complex promotes nuclear envelope sealing and mitotic spindle disassembly during late anaphase. Recruited to the reforming nuclear envelope (NE) during anaphase by LEMD2. ESCRT-III proteins are believed to mediate the necessary vesicle extrusion and/or membrane fission activities, possibly in conjunction with the AAA ATPase VPS4. This chain is Charged multivesicular body protein 2a (Chmp2a), found in Mus musculus (Mouse).